The chain runs to 115 residues: Putative septation protein SpoVG (115 aa).

The interval 88–115 (PGTIATSEVSSQLEESDSDKTLSEDLKA) is disordered. A compositionally biased stretch (polar residues) spans 91–100 (IATSEVSSQL). Basic and acidic residues predominate over residues 105–115 (SDKTLSEDLKA).

It belongs to the SpoVG family.

Functionally, could be involved in septation. This is Putative septation protein SpoVG from Macrococcus caseolyticus (strain JCSC5402) (Macrococcoides caseolyticum).